The chain runs to 446 residues: F-box/LRR-repeat protein At4g29420 (446 aa).

The F-box domain maps to 1-51 (MDELPPELWIKILSRINDSESLARCRVASKTLNSLSREVRAVNLICTWSRY). LRR repeat units follow at residues 59-84 (VVTP…SVGV), 103-130 (DLYL…SISD), 135-160 (SCWR…EVKN), 181-206 (FIRL…NLIG), 223-248 (CHWT…KLKC), 265-289 (HLSV…ELVS), 318-343 (QSER…SLSP), and 382-407 (NVHQ…RLMI).

The chain is F-box/LRR-repeat protein At4g29420 from Arabidopsis thaliana (Mouse-ear cress).